Reading from the N-terminus, the 205-residue chain is Large ribosomal subunit protein bL25 (205 aa).

The segment at 180–205 (HEEVAEEAEETEGEDAEEAPAAEGEE) is disordered. A compositionally biased stretch (acidic residues) spans 183 to 205 (VAEEAEETEGEDAEEAPAAEGEE).

The protein belongs to the bacterial ribosomal protein bL25 family. CTC subfamily. In terms of assembly, part of the 50S ribosomal subunit; part of the 5S rRNA/L5/L18/L25 subcomplex. Contacts the 5S rRNA. Binds to the 5S rRNA independently of L5 and L18.

Functionally, this is one of the proteins that binds to the 5S RNA in the ribosome where it forms part of the central protuberance. The polypeptide is Large ribosomal subunit protein bL25 (Corynebacterium diphtheriae (strain ATCC 700971 / NCTC 13129 / Biotype gravis)).